We begin with the raw amino-acid sequence, 162 residues long: CASP-like protein 1C1 (162 aa).

Residues 1–7 (MAKLHRL) are Cytoplasmic-facing. Residues 8–28 (ISAVLRLAAAGAAAAAAIIMV) form a helical membrane-spanning segment. Residues 29–50 (TSHETTSFFGIEMEAKYSYTPS) are Extracellular-facing. The chain crosses the membrane as a helical span at residues 51-71 (FVFFVVAFAVAFAYSLLALLA). The Cytoplasmic segment spans residues 72 to 79 (RPGSTASR). Residues 80-100 (LLLLSDVMVGMLLTGAVAATG) form a helical membrane-spanning segment. The Extracellular portion of the chain corresponds to 101-128 (AISQVGKSGNEHAGWLPICAQVQAYCSH). The chain crosses the membrane as a helical span at residues 129–149 (VMGALIAGFVSLLLYFLIIMY). Topologically, residues 150-162 (SLHAVAEPLCSCH) are cytoplasmic.

It belongs to the Casparian strip membrane proteins (CASP) family. Homodimer and heterodimers.

It localises to the cell membrane. The polypeptide is CASP-like protein 1C1 (Sorghum bicolor (Sorghum)).